The chain runs to 170 residues: Calcineurin subunit B type 2 (170 aa).

Gly-2 is lipidated: N-myristoyl glycine. EF-hand domains lie at 18–46, 50–85, 87–122, and 128–163; these read DEIK…FMSL, RHNP…FSVK, DEEQ…MVGN, and QLQQ…LEIH. Residues Asp-31, Asp-33, Ser-35, Ser-37, Glu-42, Asp-63, Asp-65, Asp-67, Glu-69, Glu-74, Asp-100, Asp-102, Asp-104, Tyr-106, and Glu-111 each contribute to the Ca(2+) site. The calcineurin A binding stretch occupies residues 131–136; the sequence is QLVDKT. Ca(2+) contacts are provided by Asp-141, Asp-143, Asp-145, Lys-147, and Glu-152.

Belongs to the calcineurin regulatory subunit family. As to quaternary structure, forms a complex composed of a calmodulin-dependent catalytic subunit (also known as calcineurin A) and a regulatory Ca(2+)-binding subunit (also known as calcineurin B). There are three catalytic subunits, each encoded by a separate gene (PPP3CA, PPP3CB, and PPP3CC) and two regulatory subunits which are also encoded by separate genes (PPP3R1 and PPP3R2). Interacts with SPATA33 (via PQIIIT motif). As to expression, testis-specific.

Its subcellular location is the mitochondrion. Its function is as follows. Regulatory subunit of calcineurin, a calcium-dependent, calmodulin stimulated protein phosphatase. Confers calcium sensitivity. The chain is Calcineurin subunit B type 2 (PPP3R2) from Homo sapiens (Human).